The chain runs to 96 residues: Putative regulatory protein Teth514_1762 (96 aa).

Belongs to the RemA family.

In Thermoanaerobacter sp. (strain X514), this protein is Putative regulatory protein Teth514_1762.